Reading from the N-terminus, the 79-residue chain is Polcalcin Bra r 1 (79 aa).

EF-hand domains lie at 1-36 and 39-71; these read MADAEHERIFKKFDTDGDGKISAAELEEALKKLGSV and DDVTRMMAKIDTDGDGNISFQEFTEFASANPGL. Residues Asp14, Asp16, Asp18, Lys20, Glu25, Asp49, Asp51, Asp53, Asn55, and Glu60 each coordinate Ca(2+).

This Brassica campestris (Field mustard) protein is Polcalcin Bra r 1.